A 341-amino-acid chain; its full sequence is Fructose-1,6-bisphosphatase, cytosolic (341 aa).

Mg(2+)-binding residues include Glu-71, Glu-100, Asp-121, Leu-123, and Asp-124. Substrate contacts are provided by residues 124–127 (DGSF), Asn-215, Tyr-247, Tyr-267, and Lys-277. Glu-283 serves as a coordination point for Mg(2+).

Belongs to the FBPase class 1 family. Mg(2+) is required as a cofactor.

It localises to the cytoplasm. The enzyme catalyses beta-D-fructose 1,6-bisphosphate + H2O = beta-D-fructose 6-phosphate + phosphate. The protein is Fructose-1,6-bisphosphatase, cytosolic of Pisum sativum (Garden pea).